The sequence spans 150 residues: Small ribosomal subunit protein uS11y (150 aa).

The residue at position 19 (Ser19) is a Phosphoserine.

This sequence belongs to the universal ribosomal protein uS11 family.

The protein localises to the cytoplasm. This chain is Small ribosomal subunit protein uS11y (RPS14B), found in Arabidopsis thaliana (Mouse-ear cress).